The sequence spans 273 residues: Ribosomal RNA small subunit methyltransferase A (273 aa).

S-adenosyl-L-methionine-binding residues include Asn18, Leu20, Gly45, Glu66, Asp91, and Asn113.

The protein belongs to the class I-like SAM-binding methyltransferase superfamily. rRNA adenine N(6)-methyltransferase family. RsmA subfamily.

It localises to the cytoplasm. The enzyme catalyses adenosine(1518)/adenosine(1519) in 16S rRNA + 4 S-adenosyl-L-methionine = N(6)-dimethyladenosine(1518)/N(6)-dimethyladenosine(1519) in 16S rRNA + 4 S-adenosyl-L-homocysteine + 4 H(+). In terms of biological role, specifically dimethylates two adjacent adenosines (A1518 and A1519) in the loop of a conserved hairpin near the 3'-end of 16S rRNA in the 30S particle. May play a critical role in biogenesis of 30S subunits. This chain is Ribosomal RNA small subunit methyltransferase A, found in Salmonella choleraesuis (strain SC-B67).